Consider the following 876-residue polypeptide: Exonuclease mut-7 homolog (876 aa).

The 3'-5' exonuclease domain occupies 517-571; it reads GLSLLVQQVLGTALDKTQQLSNWDRRPLCEEQVIYAAADAYCLLEVHQALCREPA. Disordered regions lie at residues 578–607 and 751–781; these read DLAG…APAA and SHQE…AAPE.

The protein belongs to the mut-7 family. Requires Mg(2+) as cofactor.

Functionally, possesses 3'-5' exoribonuclease activity. Required for 3'-end trimming of AGO1-bound miRNAs. The sequence is that of Exonuclease mut-7 homolog (EXD3) from Homo sapiens (Human).